A 295-amino-acid polypeptide reads, in one-letter code: ATP synthase gamma chain (295 aa).

The protein belongs to the ATPase gamma chain family. As to quaternary structure, F-type ATPases have 2 components, CF(1) - the catalytic core - and CF(0) - the membrane proton channel. CF(1) has five subunits: alpha(3), beta(3), gamma(1), delta(1), epsilon(1). CF(0) has three main subunits: a, b and c.

The protein localises to the cell inner membrane. In terms of biological role, produces ATP from ADP in the presence of a proton gradient across the membrane. The gamma chain is believed to be important in regulating ATPase activity and the flow of protons through the CF(0) complex. This is ATP synthase gamma chain from Methylorubrum populi (strain ATCC BAA-705 / NCIMB 13946 / BJ001) (Methylobacterium populi).